A 162-amino-acid chain; its full sequence is Shikimate kinase (162 aa).

ATP is bound at residue Gly11–Ser16. Ser15 serves as a coordination point for Mg(2+). Substrate contacts are provided by Asp33, Arg57, and Gly80. Arg116 contributes to the ATP binding site. Residue Arg132 participates in substrate binding.

It belongs to the shikimate kinase family. As to quaternary structure, monomer. Mg(2+) serves as cofactor.

It localises to the cytoplasm. The catalysed reaction is shikimate + ATP = 3-phosphoshikimate + ADP + H(+). It functions in the pathway metabolic intermediate biosynthesis; chorismate biosynthesis; chorismate from D-erythrose 4-phosphate and phosphoenolpyruvate: step 5/7. In terms of biological role, catalyzes the specific phosphorylation of the 3-hydroxyl group of shikimic acid using ATP as a cosubstrate. This chain is Shikimate kinase, found in Helicobacter pylori (strain P12).